The primary structure comprises 365 residues: MDTEFAILDEEKYYDSVFKELNLKTRSELYEISSKFMPDSQFEAIKRRGISNRKRKIKETSENSNRMEQMALKIKNVGTELKIFKKKSILDNNLKSRKAAETALNVSIPSASASSEQIIEFQKSESLSNLMSNGMINNWVRCSGDKPGIIENSDGTKFYIPPKSTFHVGDVKDIEQYSRAHDLLFDLIIADPPWFSKSVKRKRTYQMDEEVLDCLDIPVILTHDALIAFWITNRIGIEEEMIERFDKWGMEVVATWKLLKITTQGDPVYDFDNQKHKVPFESLMLAKKKDSMRKFELPENFVFASVPMSVHSHKPPLLDLLRHFGIEFTEPLELFARSLLPSTHSVGYEPFLLQSEHVFTRNISL.

The protein belongs to the MT-A70-like family.

It catalyses the reaction a 2'-deoxyadenosine in DNA + S-adenosyl-L-methionine = an N(6)-methyl-2'-deoxyadenosine in DNA + S-adenosyl-L-homocysteine + H(+). Methylates DNA on the 6th position of adenine (N(6)-methyladenosine). N(6)-methyladenosine (m6A) DNA is involved in epigenetic transgenerational inheritance. The polypeptide is DNA N6-methyl methyltransferase (Caenorhabditis elegans).